Here is a 222-residue protein sequence, read N- to C-terminus: Cytochrome b6 (222 aa).

A helical transmembrane segment spans residues 39 to 59 (IFYCLGGITLVCFIIQFATGF). Cys42 contributes to the heme c binding site. The heme b site is built by His93 and His107. The next 3 membrane-spanning stretches (helical) occupy residues 97-117 (ASMM…TGGF), 123-143 (LTWM…VTGY), and 193-213 (LHTF…FLMI). Heme b-binding residues include His194 and His209.

Belongs to the cytochrome b family. PetB subfamily. The 4 large subunits of the cytochrome b6-f complex are cytochrome b6, subunit IV (17 kDa polypeptide, PetD), cytochrome f and the Rieske protein, while the 4 small subunits are PetG, PetL, PetM and PetN. The complex functions as a dimer. Heme b is required as a cofactor. Requires heme c as cofactor.

It is found in the cellular thylakoid membrane. Component of the cytochrome b6-f complex, which mediates electron transfer between photosystem II (PSII) and photosystem I (PSI), cyclic electron flow around PSI, and state transitions. The chain is Cytochrome b6 from Rippkaea orientalis (strain PCC 8801 / RF-1) (Cyanothece sp. (strain PCC 8801)).